A 467-amino-acid chain; its full sequence is Zinc finger and BTB domain-containing protein 43 (467 aa).

M1 bears the N-acetylmethionine mark. Positions 33-97 (CDVSIVVQGH…SYTGRLVMPA (65 aa)) constitute a BTB domain. Disordered regions lie at residues 134–153 (LNHGSDHQSPSSSSYNGLVE) and 162–225 (HTDF…SAEF). Composition is skewed to basic and acidic residues over residues 164 to 174 (DFPKAQELRDG) and 182 to 194 (KDELSSQLTEHEY). Residues K182, K241, K247, K297, and K358 each participate in a glycyl lysine isopeptide (Lys-Gly) (interchain with G-Cter in SUMO2) cross-link. The C2H2-type 1; atypical zinc-finger motif lies at 373 to 394 (YPCQCGKSFTHKSQRDRHMSMH). Residues 400–422 (YGCGVCGKKFKMKHHLVGHMKIH) form a C2H2-type 2 zinc finger. T423 is modified (phosphothreonine). The C2H2-type 3; atypical zinc finger occupies 428 to 450 (YECNICAKRFMWRDSFHRHVTSC). K458 is covalently cross-linked (Glycyl lysine isopeptide (Lys-Gly) (interchain with G-Cter in SUMO2)).

This sequence belongs to the krueppel C2H2-type zinc-finger protein family. In terms of assembly, interacts with BDP1.

Its subcellular location is the nucleus. In terms of biological role, may be involved in transcriptional regulation. The chain is Zinc finger and BTB domain-containing protein 43 (ZBTB43) from Homo sapiens (Human).